Reading from the N-terminus, the 397-residue chain is S-adenosylmethionine synthase (397 aa).

ATP is bound at residue H16. D18 provides a ligand contact to Mg(2+). Residue E44 coordinates K(+). L-methionine contacts are provided by E57 and Q100. A flexible loop region spans residues 100-110; sequence QSPDIAQGVNE. ATP-binding positions include 175–177, 242–243, D251, 257–258, A274, and K278; these read DAK, RF, and RK. D251 contributes to the L-methionine binding site. An L-methionine-binding site is contributed by K282.

This sequence belongs to the AdoMet synthase family. Homotetramer; dimer of dimers. The cofactor is Mg(2+). K(+) is required as a cofactor.

The protein resides in the cytoplasm. The catalysed reaction is L-methionine + ATP + H2O = S-adenosyl-L-methionine + phosphate + diphosphate. The protein operates within amino-acid biosynthesis; S-adenosyl-L-methionine biosynthesis; S-adenosyl-L-methionine from L-methionine: step 1/1. Functionally, catalyzes the formation of S-adenosylmethionine (AdoMet) from methionine and ATP. The overall synthetic reaction is composed of two sequential steps, AdoMet formation and the subsequent tripolyphosphate hydrolysis which occurs prior to release of AdoMet from the enzyme. This is S-adenosylmethionine synthase from Streptococcus thermophilus (strain CNRZ 1066).